A 231-amino-acid polypeptide reads, in one-letter code: Ribose-5-phosphate isomerase A (231 aa).

Substrate-binding positions include 32-35, 85-88, and 98-101; these read TGST, DGAD, and KGGG. Catalysis depends on E107, which acts as the Proton acceptor. K125 is a binding site for substrate.

Belongs to the ribose 5-phosphate isomerase family. In terms of assembly, homodimer.

The enzyme catalyses aldehydo-D-ribose 5-phosphate = D-ribulose 5-phosphate. The protein operates within carbohydrate degradation; pentose phosphate pathway; D-ribose 5-phosphate from D-ribulose 5-phosphate (non-oxidative stage): step 1/1. Its function is as follows. Catalyzes the reversible conversion of ribose-5-phosphate to ribulose 5-phosphate. This chain is Ribose-5-phosphate isomerase A, found in Paraburkholderia phytofirmans (strain DSM 17436 / LMG 22146 / PsJN) (Burkholderia phytofirmans).